The following is a 100-amino-acid chain: Large ribosomal subunit protein uL23 (100 aa).

This sequence belongs to the universal ribosomal protein uL23 family. In terms of assembly, part of the 50S ribosomal subunit. Contacts protein L29, and trigger factor when it is bound to the ribosome.

Functionally, one of the early assembly proteins it binds 23S rRNA. One of the proteins that surrounds the polypeptide exit tunnel on the outside of the ribosome. Forms the main docking site for trigger factor binding to the ribosome. The sequence is that of Large ribosomal subunit protein uL23 from Prochlorococcus marinus (strain AS9601).